The sequence spans 357 residues: Dynein axonemal assembly factor 10 (357 aa).

6 WD repeats span residues 63–105 (EKAK…VPVY), 115–154 (NTID…DPVA), 162–205 (ENKR…LRWE), 207–249 (NIKN…PTKG), 257–297 (AHKS…QRSK), and 319–357 (LSTQ…LHKI).

As to quaternary structure, component of the PAQosome complex which is responsible for the biogenesis of several protein complexes and which consists of R2TP complex members RUVBL1, RUVBL2, RPAP3 and PIH1D1, URI complex members PFDN2, PFDN6, PDRG1, UXT and URI1 as well as ASDURF, POLR2E and DNAAF10/WDR92. Interacts with PIH1D1; the interaction associates DNAAF10 with the R2TP complex. Interacts with several dynein axonemal assembly factors.

Its subcellular location is the dynein axonemal particle. Key assembly factor specifically required for the stability of axonemal dynein heavy chains in cytoplasm. The polypeptide is Dynein axonemal assembly factor 10 (DNAAF10) (Bos taurus (Bovine)).